The primary structure comprises 201 residues: MKITAVIALLFSLAAASPIPVADPGVVSVSKSYADFLRVYQSWNTFANPDRPNLKKREFEAAPAKTYADFLRAYQSWNTFVNPDRPNLKKREFEAAPEKSYADFLRAYHSWNTFVNPDRPNLKKREFEAAPAKTYADFLRAYQSWNTFVNPDRPNLKKRTEEDEENEEEDEEYYRFLQFYIMTVPENSTITDVNITAKFES.

Residues 1–20 (MKITAVIALLFSLAAASPIP) form the signal peptide. 5 propeptides span residues 21–31 (VADPGVVSVSK), 58–65 (EFEAAPAK), 92–99 (EFEAAPEK), 126–133 (EFEAAPAK), and 160–201 (TEED…KFES). Residues asparagine 187 and asparagine 194 are each glycosylated (N-linked (GlcNAc...) asparagine).

In terms of processing, proteolytically cleaved by kpr, probably at the C-terminal side of dibasic Lys-Arg residues. Post-translationally, glycosylated. Most of the precursor molecules are glycosylated on at least one site, but only a small proportion are glycosylated on both sites.

It is found in the secreted. Its function is as follows. In h- cells under nutritional starvation, P-factor induces alteration of cell morphology toward mating, arrest of the cell cycle at the G1 phase prior to the initiation of DNA synthesis and indirect transcriptional activation of the sxa2 gene which down-regulates the signaling pathway. In Schizosaccharomyces pombe (strain 972 / ATCC 24843) (Fission yeast), this protein is Pro-P-factor (map2).